A 302-amino-acid polypeptide reads, in one-letter code: Acetylglutamate kinase (302 aa).

Substrate-binding positions include 68–69 (GG), Arg-90, and Asn-195.

It belongs to the acetylglutamate kinase family. ArgB subfamily.

It localises to the cytoplasm. The catalysed reaction is N-acetyl-L-glutamate + ATP = N-acetyl-L-glutamyl 5-phosphate + ADP. It participates in amino-acid biosynthesis; L-arginine biosynthesis; N(2)-acetyl-L-ornithine from L-glutamate: step 2/4. Functionally, catalyzes the ATP-dependent phosphorylation of N-acetyl-L-glutamate. This Marinomonas sp. (strain MWYL1) protein is Acetylglutamate kinase.